The primary structure comprises 405 residues: Enoyl-[acyl-carrier-protein] reductase [NADH] (405 aa).

NAD(+) contacts are provided by residues 51-56 (GASSGY), 77-78 (FE), 114-115 (DA), and 142-143 (LA). Y228 contributes to the substrate binding site. The active-site Proton donor is the Y238. NAD(+) is bound by residues K247 and 276–278 (VVT).

This sequence belongs to the TER reductase family. As to quaternary structure, monomer.

It carries out the reaction a 2,3-saturated acyl-[ACP] + NAD(+) = a (2E)-enoyl-[ACP] + NADH + H(+). It participates in lipid metabolism; fatty acid biosynthesis. Its function is as follows. Involved in the final reduction of the elongation cycle of fatty acid synthesis (FAS II). Catalyzes the reduction of a carbon-carbon double bond in an enoyl moiety that is covalently linked to an acyl carrier protein (ACP). This is Enoyl-[acyl-carrier-protein] reductase [NADH] from Chromohalobacter salexigens (strain ATCC BAA-138 / DSM 3043 / CIP 106854 / NCIMB 13768 / 1H11).